The following is a 159-amino-acid chain: ATP synthase subunit b (159 aa).

A helical membrane pass occupies residues 2 to 22 (EFNLVTIGFTIVNFIILMLIL).

It belongs to the ATPase B chain family. As to quaternary structure, F-type ATPases have 2 components, F(1) - the catalytic core - and F(0) - the membrane proton channel. F(1) has five subunits: alpha(3), beta(3), gamma(1), delta(1), epsilon(1). F(0) has three main subunits: a(1), b(2) and c(10-14). The alpha and beta chains form an alternating ring which encloses part of the gamma chain. F(1) is attached to F(0) by a central stalk formed by the gamma and epsilon chains, while a peripheral stalk is formed by the delta and b chains.

The protein resides in the cell membrane. F(1)F(0) ATP synthase produces ATP from ADP in the presence of a proton or sodium gradient. F-type ATPases consist of two structural domains, F(1) containing the extramembraneous catalytic core and F(0) containing the membrane proton channel, linked together by a central stalk and a peripheral stalk. During catalysis, ATP synthesis in the catalytic domain of F(1) is coupled via a rotary mechanism of the central stalk subunits to proton translocation. Functionally, component of the F(0) channel, it forms part of the peripheral stalk, linking F(1) to F(0). The protein is ATP synthase subunit b of Clostridium acetobutylicum (strain ATCC 824 / DSM 792 / JCM 1419 / IAM 19013 / LMG 5710 / NBRC 13948 / NRRL B-527 / VKM B-1787 / 2291 / W).